We begin with the raw amino-acid sequence, 261 residues long: DNA repair protein RecO (261 aa).

Belongs to the RecO family.

Involved in DNA repair and RecF pathway recombination. In Chlorobium limicola (strain DSM 245 / NBRC 103803 / 6330), this protein is DNA repair protein RecO.